The following is a 503-amino-acid chain: Probable apyrase 4 (503 aa).

A compositionally biased stretch (low complexity) spans 1–14 (MQRSNARSRSNINS). Positions 1–39 (MQRSNARSRSNINSDMVDPPEVQTSPGNHRSSPSTAAKP) are disordered. The Cytoplasmic segment spans residues 1–45 (MQRSNARSRSNINSDMVDPPEVQTSPGNHRSSPSTAAKPKSKRTK). The chain crosses the membrane as a helical; Signal-anchor for type II membrane protein span at residues 46–66 (SIIFVIVACVTIALGLLFIGY). Over 67-503 (SILRSGRNRR…DLSNVAKYKI (437 aa)) the chain is Extracellular. 83–93 (VIIDGGSSGTR) serves as a coordination point for ATP. The Proton acceptor role is filled by Glu206. ATP is bound at residue 230-240 (GIVELGGASAQ). N-linked (GlcNAc...) asparagine glycosylation is found at Asn261, Asn293, and Asn338.

Belongs to the GDA1/CD39 NTPase family. Ca(2+) serves as cofactor. As to expression, expressed both in the primary root and lateral root but not in the rosette leaves.

It is found in the membrane. The catalysed reaction is a ribonucleoside 5'-triphosphate + 2 H2O = a ribonucleoside 5'-phosphate + 2 phosphate + 2 H(+). Catalyzes the hydrolysis of phosphoanhydride bonds of nucleoside tri- and di-phosphates. This is Probable apyrase 4 (APY4) from Arabidopsis thaliana (Mouse-ear cress).